We begin with the raw amino-acid sequence, 302 residues long: Oxygen-dependent coproporphyrinogen-III oxidase (302 aa).

Serine 94 lines the substrate pocket. Residues histidine 98 and histidine 108 each coordinate a divalent metal cation. The Proton donor role is filled by histidine 108. 110-112 (NVR) is a substrate binding site. Residues histidine 147 and histidine 177 each contribute to the a divalent metal cation site. The segment at 242–277 (YVEFNLVYDRGTLFGLQTGGRTESILMSMPPLVRWQ) is important for dimerization. A substrate-binding site is contributed by 260–262 (GGR).

Belongs to the aerobic coproporphyrinogen-III oxidase family. As to quaternary structure, homodimer. Requires a divalent metal cation as cofactor.

It localises to the cytoplasm. The enzyme catalyses coproporphyrinogen III + O2 + 2 H(+) = protoporphyrinogen IX + 2 CO2 + 2 H2O. Its pathway is porphyrin-containing compound metabolism; protoporphyrin-IX biosynthesis; protoporphyrinogen-IX from coproporphyrinogen-III (O2 route): step 1/1. Its function is as follows. Involved in the heme biosynthesis. Catalyzes the aerobic oxidative decarboxylation of propionate groups of rings A and B of coproporphyrinogen-III to yield the vinyl groups in protoporphyrinogen-IX. In Shewanella putrefaciens (strain CN-32 / ATCC BAA-453), this protein is Oxygen-dependent coproporphyrinogen-III oxidase.